A 307-amino-acid chain; its full sequence is Protoheme IX farnesyltransferase (307 aa).

The next 8 membrane-spanning stretches (helical) occupy residues 38–58 (NTLT…LSVL), 65–85 (FFTI…NNYI), 108–128 (PGFA…FLLL), 131–151 (PMAV…YSLW), 158–178 (LNTV…WAAI), 186–206 (IAWM…LALA), 251–271 (LGIT…VLGF), and 287–307 (FVYS…VTFF).

This sequence belongs to the UbiA prenyltransferase family. Protoheme IX farnesyltransferase subfamily. Interacts with CtaA.

It is found in the cell membrane. The catalysed reaction is heme b + (2E,6E)-farnesyl diphosphate + H2O = Fe(II)-heme o + diphosphate. It functions in the pathway porphyrin-containing compound metabolism; heme O biosynthesis; heme O from protoheme: step 1/1. In terms of biological role, converts heme B (protoheme IX) to heme O by substitution of the vinyl group on carbon 2 of heme B porphyrin ring with a hydroxyethyl farnesyl side group. The chain is Protoheme IX farnesyltransferase from Bacillus thuringiensis (strain Al Hakam).